Consider the following 48-residue polypeptide: Large ribosomal subunit protein bL33A (48 aa).

Belongs to the bacterial ribosomal protein bL33 family.

The chain is Large ribosomal subunit protein bL33A from Metamycoplasma arthritidis (strain 158L3-1) (Mycoplasma arthritidis).